Consider the following 201-residue polypeptide: Akirin-2 (201 aa).

Residues S18 and S21 each carry the phosphoserine modification. The short motif at 23–28 (KRRRCA) is the Nuclear localization signal element. Position 55 is a phosphoserine (S55). Positions 198–201 (SYVS) match the SYVS motif motif.

Belongs to the akirin family. In terms of assembly, homodimer. Interacts with IPO9; the interaction is direct. Associates with 20S and 26S proteasomes. Interacts with SMARCD1; promoting SWI/SNF complex recruitment. Interacts with NFKBIZ. Interacts with YWHAB. In terms of processing, polyubiquitinated. Polyubiquitination is dependent of UBR5 that extends pre-ubiquitinated AKIRIN2.

It localises to the nucleus. The protein localises to the cytoplasm. The protein resides in the membrane. Functionally, molecular adapter that acts as a bridge between a variety of multiprotein complexes, and which is involved in embryonic development, immunity, myogenesis and brain development. Plays a key role in nuclear protein degradation by promoting import of proteasomes into the nucleus: directly binds to fully assembled 20S proteasomes at one end and to nuclear import receptor IPO9 at the other end, bridging them together and mediating the import of pre-assembled proteasome complexes through the nuclear pore. Involved in innate immunity by regulating the production of interleukin-6 (IL6) downstream of Toll-like receptor (TLR): acts by bridging the NF-kappa-B inhibitor NFKBIZ and the SWI/SNF complex, leading to promote induction of IL6. Also involved in adaptive immunity by promoting B-cell activation. Involved in brain development: required for the survival and proliferation of cerebral cortical progenitor cells. Involved in myogenesis: required for skeletal muscle formation and skeletal development, possibly by regulating expression of muscle differentiation factors. Also plays a role in facilitating interdigital tissue regression during limb development. The protein is Akirin-2 of Mus musculus (Mouse).